Reading from the N-terminus, the 199-residue chain is Guanylate kinase (199 aa).

Residues 20 to 198 (GKLIVLTGPS…ALQAIEVALF (179 aa)) enclose the Guanylate kinase-like domain. 27-34 (GPSGVGKG) is a binding site for ATP.

The protein belongs to the guanylate kinase family.

It localises to the cytoplasm. The catalysed reaction is GMP + ATP = GDP + ADP. Its function is as follows. Essential for recycling GMP and indirectly, cGMP. The chain is Guanylate kinase from Trichormus variabilis (strain ATCC 29413 / PCC 7937) (Anabaena variabilis).